The primary structure comprises 61 residues: UPF0434 protein Pfl01_4174 (61 aa).

This sequence belongs to the UPF0434 family.

The sequence is that of UPF0434 protein Pfl01_4174 from Pseudomonas fluorescens (strain Pf0-1).